A 342-amino-acid chain; its full sequence is Anthranilate phosphoribosyltransferase (342 aa).

5-phospho-alpha-D-ribose 1-diphosphate-binding positions include G83, G86–D87, T91, N93–T96, K111–S119, and A123. G83 contacts anthranilate. S95 contributes to the Mg(2+) binding site. R169 serves as a coordination point for anthranilate. 2 residues coordinate Mg(2+): D228 and E229.

Belongs to the anthranilate phosphoribosyltransferase family. Homodimer. Mg(2+) serves as cofactor.

It carries out the reaction N-(5-phospho-beta-D-ribosyl)anthranilate + diphosphate = 5-phospho-alpha-D-ribose 1-diphosphate + anthranilate. The protein operates within amino-acid biosynthesis; L-tryptophan biosynthesis; L-tryptophan from chorismate: step 2/5. In terms of biological role, catalyzes the transfer of the phosphoribosyl group of 5-phosphorylribose-1-pyrophosphate (PRPP) to anthranilate to yield N-(5'-phosphoribosyl)-anthranilate (PRA). The sequence is that of Anthranilate phosphoribosyltransferase from Neisseria gonorrhoeae (strain ATCC 700825 / FA 1090).